A 259-amino-acid polypeptide reads, in one-letter code: Type III pantothenate kinase (259 aa).

6–13 provides a ligand contact to ATP; sequence DVGNTNIV. Substrate-binding positions include Tyr100 and 107 to 110; that span reads GADR. Asp109 functions as the Proton acceptor in the catalytic mechanism. Residue Asp129 coordinates K(+). Thr132 lines the ATP pocket. Substrate is bound at residue Thr184.

Belongs to the type III pantothenate kinase family. Homodimer. NH4(+) serves as cofactor. K(+) is required as a cofactor.

It localises to the cytoplasm. The enzyme catalyses (R)-pantothenate + ATP = (R)-4'-phosphopantothenate + ADP + H(+). The protein operates within cofactor biosynthesis; coenzyme A biosynthesis; CoA from (R)-pantothenate: step 1/5. In terms of biological role, catalyzes the phosphorylation of pantothenate (Pan), the first step in CoA biosynthesis. The chain is Type III pantothenate kinase from Clostridium kluyveri (strain NBRC 12016).